Reading from the N-terminus, the 247-residue chain is Probable transcriptional regulatory protein DVU_2259 (247 aa).

The segment at 1–22 (MAGHSKWANIQHRKGRQDAKRG) is disordered.

This sequence belongs to the TACO1 family.

It localises to the cytoplasm. This is Probable transcriptional regulatory protein DVU_2259 from Nitratidesulfovibrio vulgaris (strain ATCC 29579 / DSM 644 / CCUG 34227 / NCIMB 8303 / VKM B-1760 / Hildenborough) (Desulfovibrio vulgaris).